An 817-amino-acid chain; its full sequence is Nuclear hormone receptor family member nhr-48 (817 aa).

The interval Tyr49–Glu91 is disordered. The segment covering Asp52 to Gly62 has biased composition (acidic residues). Positions Ser63–Lys72 are enriched in gly residues. A DNA-binding region (nuclear receptor) is located at residues Asn97–Ser172. NR C4-type zinc fingers lie at residues Cys100–Cys120 and Cys136–Cys155. Acidic residues predominate over residues Ala202–Tyr212. Disordered regions lie at residues Ala202–Gln221 and Met258–Leu284. Over residues Leu273–Leu284 the composition is skewed to polar residues.

Belongs to the nuclear hormone receptor family.

It is found in the nucleus. Functionally, orphan nuclear receptor. This is Nuclear hormone receptor family member nhr-48 (nhr-48) from Caenorhabditis elegans.